Here is a 351-residue protein sequence, read N- to C-terminus: Inositol monophosphatase 3 (351 aa).

The helical transmembrane segment at 11-31 (LGIGVFCLLALGVLYHVYSGF) threads the bilayer. 5 residues coordinate Mg(2+): E121, D162, L164, D165, and D288. Substrate is bound at residue E121. Residues 164–167 (LDAT) and D288 each bind substrate.

This sequence belongs to the inositol monophosphatase superfamily. The cofactor is Mg(2+).

The protein resides in the membrane. The catalysed reaction is a myo-inositol phosphate + H2O = myo-inositol + phosphate. It functions in the pathway polyol metabolism; myo-inositol biosynthesis; myo-inositol from D-glucose 6-phosphate: step 2/2. This is Inositol monophosphatase 3 (bpnt2) from Xenopus laevis (African clawed frog).